The sequence spans 339 residues: Ketol-acid reductoisomerase (NADP(+)) (339 aa).

The KARI N-terminal Rossmann domain maps to 1–182 (MRVYYDRDAD…GGGRAGIIET (182 aa)). NADP(+) contacts are provided by residues 24-27 (YGSQ), Arg-48, Ser-51, Thr-53, and 83-86 (DELQ). Residue His-108 is part of the active site. Gly-134 contributes to the NADP(+) binding site. Positions 183–328 (SFKEECETDL…AKLREMMPWI (146 aa)) constitute a KARI C-terminal knotted domain. Positions 191, 195, 227, and 231 each coordinate Mg(2+). A substrate-binding site is contributed by Ser-252.

This sequence belongs to the ketol-acid reductoisomerase family. Requires Mg(2+) as cofactor.

It catalyses the reaction (2R)-2,3-dihydroxy-3-methylbutanoate + NADP(+) = (2S)-2-acetolactate + NADPH + H(+). It carries out the reaction (2R,3R)-2,3-dihydroxy-3-methylpentanoate + NADP(+) = (S)-2-ethyl-2-hydroxy-3-oxobutanoate + NADPH + H(+). The protein operates within amino-acid biosynthesis; L-isoleucine biosynthesis; L-isoleucine from 2-oxobutanoate: step 2/4. Its pathway is amino-acid biosynthesis; L-valine biosynthesis; L-valine from pyruvate: step 2/4. Involved in the biosynthesis of branched-chain amino acids (BCAA). Catalyzes an alkyl-migration followed by a ketol-acid reduction of (S)-2-acetolactate (S2AL) to yield (R)-2,3-dihydroxy-isovalerate. In the isomerase reaction, S2AL is rearranged via a Mg-dependent methyl migration to produce 3-hydroxy-3-methyl-2-ketobutyrate (HMKB). In the reductase reaction, this 2-ketoacid undergoes a metal-dependent reduction by NADPH to yield (R)-2,3-dihydroxy-isovalerate. The chain is Ketol-acid reductoisomerase (NADP(+)) from Rhodopseudomonas palustris (strain BisB5).